Reading from the N-terminus, the 415-residue chain is Nacrein-like protein C2 (415 aa).

A glycan (N-linked (GlcNAc...) asparagine) is linked at Asn-27. In terms of domain architecture, Alpha-carbonic anhydrase spans 33–414; sequence AGFSYDRSIC…KNKVTVYKSF (382 aa). Positions 132, 134, and 157 each coordinate Zn(2+). Positions 201–297 are disordered; the sequence is DEPDDEECKH…GENGHKHGCR (97 aa). Positions 207-219 are enriched in basic and acidic residues; that stretch reads ECKHILKGHHPDN. Low complexity predominate over residues 220 to 289; the sequence is NENGNGDNGN…NNGENGNNGE (70 aa). 22 consecutive repeat copies span residues 225-227, 228-230, 231-233, 234-236, 237-239, 240-242, 243-245, 246-248, 249-251, 252-254, 255-257, 258-260, 261-263, 264-266, 267-269, 270-272, 273-275, 276-278, 279-281, 282-284, 285-286, and 288-290. The tract at residues 225–290 is 27 X 3 AA approximate tandem repeats of G-X-N; sequence GDNGNNGYNG…NGENGNNGEN (66 aa). Residue 355 to 356 coordinates substrate; the sequence is TT.

This sequence belongs to the alpha-carbonic anhydrase family. As to quaternary structure, homooligomer; disulfide-linked. May also be disulfide-linked to insoluble organic matrix. Zn(2+) serves as cofactor. As to expression, expressed in the mantle.

The protein localises to the secreted. The protein resides in the extracellular space. It is found in the extracellular matrix. The enzyme catalyses hydrogencarbonate + H(+) = CO2 + H2O. Functionally, acts as a negative regulator for calcification in the shells of mollusks. May function both as a calcium concentrator and as a carbonic anhydrase required for production of carbonate ions, which are assembled to CaCO(3) at mineralization sites. Is important for shell formation in both the calcitic prismatic layer and the aragonitic nacreous layer. Shows inhibitory activity of crystal formation when present in free state but, when attached to the insoluble matrix, may regulate the form and size of aragonite crystal. This chain is Nacrein-like protein C2, found in Crassostrea nippona (Iwagaki oyster).